The sequence spans 922 residues: Non-centrosomal microtubule array protein 1 (922 aa).

Polar residues predominate over residues 1–10 (MSNERVSTGS). Disordered stretches follow at residues 1–134 (MSNE…HLPP), 250–277 (PVRL…TVPR), 465–491 (KSRH…QMNL), and 533–563 (TQKE…SNLS). Composition is skewed to basic and acidic residues over residues 43–54 (SMERKDMPDRPK) and 70–94 (PKDR…KECA). Residues 99-113 (SNTSSEHSSRSNSST) are compositionally biased toward low complexity. 2 stretches are compositionally biased toward basic and acidic residues: residues 256-276 (RGDT…DTVP) and 468-484 (HLSE…ERRG). Positions 539-563 (SHSTPSQSRHSSSKSSHFNGSSNLS) are enriched in low complexity. The stretch at 564 to 728 (TSEQLRLQEM…RSVSTLRLEQ (165 aa)) forms a coiled coil.

It is found in the cytoplasm. The protein resides in the cytoskeleton. It localises to the apical cell membrane. The protein localises to the cell junction. Its subcellular location is the hemidesmosome. It is found in the adherens junction. Plays a role in the assembly of microtubule arrays in the germline acting redundantly with ptrn-1 to control circumferential microtubule assembly along the body which is necessary for larval development, viability, and morphology and integrity of the epidermis. Required for microtubule stability and anchorage by binding to microtubule minus ends. Recruited to hemidesomosomes in early embryonic elongation to direct the nucleation and growth of non-centrosomal microtubules. In terms of biological role, required for normal nuclear migration in the embryonic epidermis. Functionally, directs the assembly of non-centrosomal microtubule arrays that determine the position of nuclei within intracellular compartments in the epidermis and this is independent of ptrn-1 activity. The protein is Non-centrosomal microtubule array protein 1 of Caenorhabditis elegans.